We begin with the raw amino-acid sequence, 475 residues long: D-lactate dehydrogenase (475 aa).

The 180-residue stretch at 43–222 (YGKARPEVLV…TELTLKVIPA (180 aa)) folds into the FAD-binding PCMH-type domain.

Belongs to the FAD-binding oxidoreductase/transferase type 4 family. Requires FAD as cofactor. Zn(2+) is required as a cofactor.

It carries out the reaction (R)-lactate + A = pyruvate + AH2. Functionally, catalyzes the dehydrogenation of (R)-lactate (D-lactate) to pyruvate. Active in vitro with the artificial electron acceptor 2,6-dichlorophenolindophenol (DCPIP), but not with NAD, NADP, or cytochrome c. Also displays a very low oxidase activity in vitro on D-lactate and L-lactate with O2 as the electron acceptor, but this activity is most likely not physiological. The protein is D-lactate dehydrogenase of Anaerostipes hadrus.